The primary structure comprises 208 residues: Uracil phosphoribosyltransferase (208 aa).

Residues R78, R103, and 130 to 138 each bind 5-phospho-alpha-D-ribose 1-diphosphate; that span reads DPMLATGGS. Uracil contacts are provided by residues I193 and 198–200; that span reads GDA. Position 199 (D199) interacts with 5-phospho-alpha-D-ribose 1-diphosphate.

It belongs to the UPRTase family. Mg(2+) serves as cofactor.

The catalysed reaction is UMP + diphosphate = 5-phospho-alpha-D-ribose 1-diphosphate + uracil. Its pathway is pyrimidine metabolism; UMP biosynthesis via salvage pathway; UMP from uracil: step 1/1. Its activity is regulated as follows. Allosterically activated by GTP. Its function is as follows. Catalyzes the conversion of uracil and 5-phospho-alpha-D-ribose 1-diphosphate (PRPP) to UMP and diphosphate. In Mannheimia succiniciproducens (strain KCTC 0769BP / MBEL55E), this protein is Uracil phosphoribosyltransferase.